A 417-amino-acid polypeptide reads, in one-letter code: Spermidine/putrescine import ATP-binding protein PotA (417 aa).

Residues 5 to 308 form the ABC transporter domain; the sequence is IILKDLTKVF…PANRFVAQFV (304 aa). 37-44 is an ATP binding site; it reads GPSGCGKT. The interval 105–177 is insert; the sequence is DFNSKIKDNL…TALKCKKINK (73 aa).

Belongs to the ABC transporter superfamily. Spermidine/putrescine importer (TC 3.A.1.11.1) family. As to quaternary structure, the complex is composed of two ATP-binding proteins (PotA), two transmembrane proteins (PotB and PotC) and a solute-binding protein (PotD).

It is found in the cell membrane. The catalysed reaction is ATP + H2O + polyamine-[polyamine-binding protein]Side 1 = ADP + phosphate + polyamineSide 2 + [polyamine-binding protein]Side 1.. In terms of biological role, part of the ABC transporter complex PotABCD involved in spermidine/putrescine import. Responsible for energy coupling to the transport system. The protein is Spermidine/putrescine import ATP-binding protein PotA of Aster yellows witches'-broom phytoplasma (strain AYWB).